Consider the following 201-residue polypeptide: Cell division protein SepF (201 aa).

The disordered stretch occupies residues 1–94 (MALKDLFSGF…TTSKNNARNV (94 aa)). The segment covering 13–28 (VEEEDDELEAPPEENE) has biased composition (acidic residues). The span at 35-44 (PKQQAQSQNQ) shows a compositional bias: low complexity. Residues 59-88 (SIQSVPKKQSTRLQQSSGERKYQMNNTTSK) are compositionally biased toward polar residues.

The protein belongs to the SepF family. Homodimer. Interacts with FtsZ.

It localises to the cytoplasm. Functionally, cell division protein that is part of the divisome complex and is recruited early to the Z-ring. Probably stimulates Z-ring formation, perhaps through the cross-linking of FtsZ protofilaments. Its function overlaps with FtsA. The protein is Cell division protein SepF of Staphylococcus saprophyticus subsp. saprophyticus (strain ATCC 15305 / DSM 20229 / NCIMB 8711 / NCTC 7292 / S-41).